The sequence spans 269 residues: uncharacterized protein (269 aa).

Positions 181–191 are enriched in basic and acidic residues; that stretch reads QKKELSPHEIA. Positions 181–203 are disordered; the sequence is QKKELSPHEIAESPSSHSTSPMG. The segment covering 193 to 202 has biased composition (polar residues); sequence SPSSHSTSPM. Serine 200 carries the phosphoserine modification.

This is an uncharacterized protein from Schizosaccharomyces pombe (strain 972 / ATCC 24843) (Fission yeast).